We begin with the raw amino-acid sequence, 380 residues long: MEINTDKYKNITRNLEREMINLNPIQRGGIIPTESKKIIYEYWDGYSVCDYCSGRLDKIETPPINEFLEDMSKFLGMDITRPTHGARESKYAVMNSVCKEGDYVVLDGNAHYTSYVALERAKLNYEKTDIEEYPTFRVIPESYAEKIDMLEDSKKNIGLILLTHVDGNYGNVADVKKVGKIAKSKGYPFLLNCAYSAGRMPIDGKKLNVDFIAASGHKSMAASGPCGLLSINKSYEDEVLETSKVNAVKELQMLGCTSRGIPILSLMASFEHLIERVKQWDLEVEKTRKVVNELEPLGFNQIGEKPRNHDIIRFETPILDEIAEKDKRRGFFFYEELKKRGIGGIRRGVTKEFKMSVYGLTNSQVDYVINSMKSIINELR.

Pyridoxal 5'-phosphate contacts are provided by residues 86–87 (AR), N192, and 215–217 (SGH). K218 bears the N6-(pyridoxal phosphate)lysine mark.

It belongs to the SepCysS family. As to quaternary structure, homodimer. Interacts with SepRS. It depends on pyridoxal 5'-phosphate as a cofactor.

The enzyme catalyses O-phospho-L-seryl-tRNA(Cys) + hydrogen sulfide + H(+) = L-cysteinyl-tRNA(Cys) + phosphate. Its function is as follows. Converts O-phospho-L-seryl-tRNA(Cys) (Sep-tRNA(Cys)) to L-cysteinyl-tRNA(Cys) (Cys-tRNA(Cys)). The polypeptide is O-phospho-L-seryl-tRNA:Cys-tRNA synthase (Methanococcus maripaludis (strain C6 / ATCC BAA-1332)).